A 970-amino-acid polypeptide reads, in one-letter code: Disks large 1 tumor suppressor protein (970 aa).

Residues 4 to 64 (KKQEAHRALE…FYELTLLDDS (61 aa)) enclose the L27 domain. The interval 161–209 (TENAKEPTVEQQQKQQQAQQRSSRSPQQQNPQQQQGSKSRSGSQTVNGD) is disordered. Over residues 171 to 204 (QQQKQQQAQQRSSRSPQQQNPQQQQGSKSRSGSQ) the composition is skewed to low complexity. 2 consecutive PDZ domains span residues 216 to 303 (DIQL…KRKR) and 330 to 421 (EIDL…GKTQ). The tract at residues 424 to 477 (TTSASGGGGGGLSSGQQLSQSQSQLATSQSQSQVHQQQHATPMVNSQSTEPGSR) is disordered. Positions 437–462 (SGQQLSQSQSQLATSQSQSQVHQQQH) are enriched in low complexity. A compositionally biased stretch (polar residues) spans 466–477 (MVNSQSTEPGSR). S496 carries the phosphoserine modification. The 82-residue stretch at 506-587 (TITIQKGPQG…VVTLLAQYRP (82 aa)) folds into the PDZ 3 domain. The 71-residue stretch at 620 to 690 (KRSLYVRALF…PSKRRWERKM (71 aa)) folds into the SH3 domain. T714 is subject to Phosphothreonine. The 176-residue stretch at 780–955 (TRPVIILGPL…IYSKVKSMIW (176 aa)) folds into the Guanylate kinase-like domain.

Belongs to the MAGUK family. In terms of tissue distribution, during the cellular blastoderm stage, isoform B, isoform F, isoform H, isoform I and isoform L expression is localized to the cell borders. From stage 11 onwards, expression is found predominantly in the developing nervous system: axon bundles in the ventral cord and the brain. Stage 14 and 15 embryos exhibit expression in the developing body wall muscle. Expression in neuropil regions of the CNS and at NMJs persists through to larval development. Other isoforms show expression in embryonic epithelial cells. In larvae, expression is seen as a belt around salivary glands, imaginal disks and proventriculus. Expressed in adult reproductive tissues. In epithelia, coexpressed with scrib throughout development.

The protein localises to the cytoplasm. Its subcellular location is the cell membrane. The protein resides in the basolateral cell membrane. It is found in the cytoskeleton. It localises to the cell junction. The protein localises to the septate junction. In terms of biological role, during embryonic development, some isoforms are essential for proper neuronal differentiation and organization. Required for cell polarity; maintenance of apicobasal polarity. Plays a critical role at septate junctions in cellular growth control during larval development. The presence of a guanylate kinase domain suggests involvement in cellular adhesion as well as signal transduction to control cellular proliferation. This chain is Disks large 1 tumor suppressor protein (dlg1), found in Drosophila melanogaster (Fruit fly).